The following is a 124-amino-acid chain: Replication restart protein PriB (124 aa).

Residues 12–112 (IDNCLTLTGI…LHTEQIEFID (101 aa)) enclose the SSB domain.

The protein belongs to the PriB family. Homodimer. Interacts with PriA and DnaT. Component of the replication restart primosome. Primosome assembly occurs via a 'hand-off' mechanism. PriA binds to replication forks, subsequently PriB then DnaT bind; DnaT then displaces ssDNA to generate the helicase loading substrate.

In terms of biological role, involved in the restart of stalled replication forks, which reloads the replicative helicase on sites other than the origin of replication; the PriA-PriB pathway is the major replication restart pathway. During primosome assembly it facilitates complex formation between PriA and DnaT on DNA; stabilizes PriA on DNA. Stimulates the DNA unwinding activity of PriA helicase. The protein is Replication restart protein PriB of Haemophilus ducreyi (strain 35000HP / ATCC 700724).